A 507-amino-acid chain; its full sequence is Probable cytosol aminopeptidase (507 aa).

Mn(2+) is bound by residues lysine 254 and aspartate 259. The active site involves lysine 266. Positions 277, 336, and 338 each coordinate Mn(2+). Residue arginine 340 is part of the active site. Positions 486 to 507 are disordered; the sequence is PRKAQPKARSAKRSKPVSRTRA. Residues 489–507 are compositionally biased toward basic residues; the sequence is AQPKARSAKRSKPVSRTRA.

It belongs to the peptidase M17 family. Requires Mn(2+) as cofactor.

The protein resides in the cytoplasm. The enzyme catalyses Release of an N-terminal amino acid, Xaa-|-Yaa-, in which Xaa is preferably Leu, but may be other amino acids including Pro although not Arg or Lys, and Yaa may be Pro. Amino acid amides and methyl esters are also readily hydrolyzed, but rates on arylamides are exceedingly low.. It catalyses the reaction Release of an N-terminal amino acid, preferentially leucine, but not glutamic or aspartic acids.. Functionally, presumably involved in the processing and regular turnover of intracellular proteins. Catalyzes the removal of unsubstituted N-terminal amino acids from various peptides. This is Probable cytosol aminopeptidase from Polaromonas sp. (strain JS666 / ATCC BAA-500).